We begin with the raw amino-acid sequence, 305 residues long: UDP-3-O-acyl-N-acetylglucosamine deacetylase (305 aa).

3 residues coordinate Zn(2+): H79, H238, and D242. The active-site Proton donor is the H265.

This sequence belongs to the LpxC family. Requires Zn(2+) as cofactor.

The catalysed reaction is a UDP-3-O-[(3R)-3-hydroxyacyl]-N-acetyl-alpha-D-glucosamine + H2O = a UDP-3-O-[(3R)-3-hydroxyacyl]-alpha-D-glucosamine + acetate. The protein operates within glycolipid biosynthesis; lipid IV(A) biosynthesis; lipid IV(A) from (3R)-3-hydroxytetradecanoyl-[acyl-carrier-protein] and UDP-N-acetyl-alpha-D-glucosamine: step 2/6. Functionally, catalyzes the hydrolysis of UDP-3-O-myristoyl-N-acetylglucosamine to form UDP-3-O-myristoylglucosamine and acetate, the committed step in lipid A biosynthesis. In Citrobacter koseri (strain ATCC BAA-895 / CDC 4225-83 / SGSC4696), this protein is UDP-3-O-acyl-N-acetylglucosamine deacetylase.